A 553-amino-acid chain; its full sequence is Tether containing UBX domain for GLUT4 (553 aa).

Alanine 2 carries the post-translational modification N-acetylalanine. Residues 182-202 show a composition bias toward low complexity; that stretch reads PGSLGSSASAGQAAASAPLPL. The interval 182 to 324 is disordered; sequence PGSLGSSASA…REPVDREPVV (143 aa). Residue serine 184 is modified to Phosphoserine. The span at 206–217 shows a compositional bias: basic and acidic residues; sequence ELSRGDLSRPED. The span at 260-280 shows a compositional bias: low complexity; it reads RPLTSSSAKLPKSLSSPGGPS. At serine 275 the chain carries Phosphoserine. A compositionally biased stretch (basic and acidic residues) spans 296 to 324; that stretch reads EQERERDPQQEQERERPVDREPVDREPVV. The interaction with GLUT4 stretch occupies residues 317–380; sequence PVDREPVVCH…LVTKAFREAQ (64 aa). Residues 386–462 enclose the UBX domain; sequence ERYPKVALRV…NLFPAALVHL (77 aa). The tract at residues 499 to 536 is disordered; it reads GSPSPLPAPDPAPKSEPAAEEGALVPPEPIPGTAQPVK. Serine 500 and serine 502 each carry phosphoserine. Residues 502–512 are compositionally biased toward pro residues; that stretch reads SPLPAPDPAPK.

As to quaternary structure, interacts with GLUT4. Interacts with VCPKMT. Interacts with VCP. As to expression, ubiquitous. Highly expressed in testis, heart, skeletal muscle and pancreas.

It localises to the endomembrane system. The protein localises to the endoplasmic reticulum-Golgi intermediate compartment membrane. It is found in the cytoplasm. The protein resides in the nucleus. Functionally, tethering protein that sequesters GLUT4-containing vesicles in the cytoplasm in the absence of insulin. Modulates the amount of GLUT4 that is available at the cell surface. Enhances VCP methylation catalyzed by VCPKMT. The sequence is that of Tether containing UBX domain for GLUT4 (ASPSCR1) from Homo sapiens (Human).